The following is a 225-amino-acid chain: Cytidylate kinase (225 aa).

11 to 19 (GPAAAGKST) provides a ligand contact to ATP.

Belongs to the cytidylate kinase family. Type 1 subfamily.

The protein resides in the cytoplasm. It catalyses the reaction CMP + ATP = CDP + ADP. The catalysed reaction is dCMP + ATP = dCDP + ADP. The chain is Cytidylate kinase from Bacillus cereus (strain B4264).